The sequence spans 460 residues: 3-ketoacyl-CoA synthase 7 (460 aa).

The chain crosses the membrane as a helical span at residues 21–41; that stretch reads FHQFLVASACVLIAVFGYYFF. Residues 38 to 328 form the FAE domain; it reads YYFFKPRCII…YIISFIQRKW (291 aa). Residues C183, H262, H345, H349, and N382 contribute to the active site.

Belongs to the thiolase-like superfamily. Chalcone/stilbene synthases family. As to expression, expressed in flowers.

The protein localises to the membrane. It catalyses the reaction a very-long-chain acyl-CoA + malonyl-CoA + H(+) = a very-long-chain 3-oxoacyl-CoA + CO2 + CoA. The protein operates within lipid metabolism; fatty acid biosynthesis. The protein is 3-ketoacyl-CoA synthase 7 of Arabidopsis thaliana (Mouse-ear cress).